The following is a 246-amino-acid chain: Small ribosomal subunit protein uS2 (246 aa).

The tract at residues 224–246 is disordered; sequence AKQGEESAETEAKEAETTETTTA. The segment covering 225–239 has biased composition (basic and acidic residues); it reads KQGEESAETEAKEAE.

The protein belongs to the universal ribosomal protein uS2 family.

The sequence is that of Small ribosomal subunit protein uS2 from Bacillus licheniformis (strain ATCC 14580 / DSM 13 / JCM 2505 / CCUG 7422 / NBRC 12200 / NCIMB 9375 / NCTC 10341 / NRRL NRS-1264 / Gibson 46).